A 613-amino-acid chain; its full sequence is GPI mannosyltransferase 3 (613 aa).

N-linked (GlcNAc...) asparagine glycosylation occurs at N19. Helical transmembrane passes span 22 to 42, 83 to 103, 106 to 126, 132 to 152, 168 to 188, 216 to 236, 252 to 272, 280 to 300, 309 to 329, 342 to 362, 369 to 389, and 411 to 431; these read FFLR…ATFF, LFAG…PVGI, ATIL…LGDW, AVSI…LQIF, LEMT…LGVA, LAVV…LFTI, VVTL…ISAA, FWTF…LAVF, YFLQ…VASL, FNVL…LSLI, FIYP…ASFF, and YLFV…FFHQ.

Belongs to the glycosyltransferase 22 family. PIGB subfamily.

It localises to the endoplasmic reticulum membrane. It functions in the pathway glycolipid biosynthesis; glycosylphosphatidylinositol-anchor biosynthesis. Functionally, mannosyltransferase involved in glycosylphosphatidylinositol-anchor biosynthesis. Transfers the third mannose to Man2-GlcN-acyl-PI during GPI precursor assembly. This chain is GPI mannosyltransferase 3 (GPI10), found in Gibberella zeae (strain ATCC MYA-4620 / CBS 123657 / FGSC 9075 / NRRL 31084 / PH-1) (Wheat head blight fungus).